The primary structure comprises 119 residues: Beta-2-microglobulin (119 aa).

Residues 1 to 20 (MASSVVVALLVLLSLSGLEA) form the signal peptide. Positions 25 to 114 (PKIQVYSRHP…VTFSTPKTVK (90 aa)) constitute an Ig-like C1-type domain. A disulfide bridge connects residues Cys-45 and Cys-100.

The protein belongs to the beta-2-microglobulin family. In terms of assembly, heterodimer of an alpha chain and a beta chain. Beta-2-microglobulin is the beta-chain of major histocompatibility complex class I molecules.

It is found in the secreted. In terms of biological role, component of the class I major histocompatibility complex (MHC). Involved in the presentation of peptide antigens to the immune system. The chain is Beta-2-microglobulin (B2M) from Callithrix aurita (White-eared marmoset).